The chain runs to 225 residues: 7-cyano-7-deazaguanine synthase (225 aa).

Residue 10-20 (FSGGQDSTTLA) participates in ATP binding. Positions 190, 205, 208, and 211 each coordinate Zn(2+).

It belongs to the QueC family. The cofactor is Zn(2+).

It catalyses the reaction 7-carboxy-7-deazaguanine + NH4(+) + ATP = 7-cyano-7-deazaguanine + ADP + phosphate + H2O + H(+). It functions in the pathway purine metabolism; 7-cyano-7-deazaguanine biosynthesis. Functionally, catalyzes the ATP-dependent conversion of 7-carboxy-7-deazaguanine (CDG) to 7-cyano-7-deazaguanine (preQ(0)). The chain is 7-cyano-7-deazaguanine synthase from Helicobacter acinonychis (strain Sheeba).